A 221-amino-acid polypeptide reads, in one-letter code: Sugar transporter SWEET1 (221 aa).

7 helical membrane passes run 3 to 23, 42 to 62, 68 to 88, 96 to 116, 126 to 146, 160 to 180, and 186 to 206; these read AGGF…LGMF, VQFL…SYGA, ILIV…LAYL, VVLL…GYFW, LQLL…SPLA, LSYP…LYGF, and YIMV…WLFW. The 85-residue stretch at 10–94 folds into the MtN3/slv 1 domain; it reads LIYGACVVFT…LAYLHYCPRK (85 aa). A MtN3/slv 2 domain is found at 127–212; sequence QLLGLFCSVF…WLFWKYPQEQ (86 aa). Residues 149 to 221 form a mediates interaction with TRPV2 region; the sequence is AKVIQTKSTQ…QDRNYWFLQT (73 aa).

It belongs to the SWEET sugar transporter family. In terms of assembly, interacts with TRPV2; the interaction probably occurs intracellularly and depends on TRPV2 N-glycosylation.

It is found in the golgi apparatus membrane. Its subcellular location is the cell membrane. In terms of biological role, mediates sugar transport across membranes. May stimulate V(D)J recombination by the activation of RAG1. The protein is Sugar transporter SWEET1 (SLC50A1) of Papio anubis (Olive baboon).